Consider the following 69-residue polypeptide: Conotoxin Eb6.9 (69 aa).

A signal peptide spans 1–17 (VLIIAVLFLTACQLTTA). The propeptide occupies 18–41 (ETYSRGRQKHRARRSTDKNSKWTR). Cystine bridges form between Cys-43–Cys-57, Cys-50–Cys-61, and Cys-56–Cys-68.

This sequence belongs to the conotoxin O1 superfamily. In terms of tissue distribution, expressed by the venom duct.

The protein localises to the secreted. The chain is Conotoxin Eb6.9 (E1) from Conus ebraeus (Hebrew cone).